Consider the following 792-residue polypeptide: E3 UFM1-protein ligase 1 (792 aa).

Alanine 2 bears the N-acetylalanine mark. The tract at residues 2-200 (ADAWEEIRRL…RGLFSAITRP (199 aa)) is mediates interaction with DDRGK1. The tract at residues 2 to 212 (ADAWEEIRRL…VNSLISRYGF (211 aa)) is required for E3 UFM1-protein ligase activity. The interval 121–250 (DRLAEEVNDK…KAVFIPDIYS (130 aa)) is involved in CDK5RAP3-binding. The tract at residues 200 to 400 (PTAVNSLISR…NPVHLITEED (201 aa)) is mediates interaction with TRIP4. Residues 412–471 (TSKKDKKDERRRKATEGSGSVRGGGGSNAREYKIKKTKKKGRKDDDSDDESSHTGKKKPE) are disordered. Arginine 433 is modified (omega-N-methylarginine). Over residues 453 to 471 (RKDDDSDDESSHTGKKKPE) the composition is skewed to basic and acidic residues. Serine 458 is modified (phosphoserine). Residues 488 to 682 (LQDAPEEFIS…QLKVTEDPAL (195 aa)) form a mediates interaction with CDK5RAP3 region. At threonine 534 the chain carries Phosphothreonine. Position 752 is a phosphoserine (serine 752).

The protein belongs to the UFL1 family. In terms of assembly, catalytic component of the UFM1 ribosome E3 ligase (UREL) complex, composed of UFL1, DDRGK1 and CDK5RAP3. Interacts with E2-like enzyme UFC1. Interacts with RELA. Interacts with NBN; promoting recruitment to double-strand breaks following DNA damage. Interacts (when phosphorylated) with YWHAG/14-3-3-gamma; sequestering UFL1 and preventing its association with PDCD1/PD-1 substrate. Ubiquitinated, leading to its degradation by the proteasome. Interaction with CDK5RAP3 protects both proteins against ubiquitination and degradation via the proteasome. Post-translationally, phosphorylation at Thr-534 by AMPK promotes its interaction with YWHAG/14-3-3-gamma, thereby preventing UFL1 association with PDCD1/PD-1 substrate.

It is found in the endoplasmic reticulum membrane. Its subcellular location is the cytoplasm. It localises to the cytosol. The protein localises to the nucleus. The protein resides in the chromosome. E3 protein ligase that mediates ufmylation, the covalent attachment of the ubiquitin-like modifier UFM1 to lysine residues on target proteins, and which plays a key role in various processes, such as ribosome recycling, response to DNA damage, interferon response or reticulophagy (also called ER-phagy). Catalyzes ufmylation of many protein, such as CD274/PD-L1, CDK5RAP3, CYB5R3, DDRGK1, EIF6, histone H4, MRE11, P4HB, PDCD1/PD-1, TRIP4, RPN1, RPS20/uS10, RPL10/uL16, RPL26/uL24, SYVN1/HRD1 and TP53/p53. As part of the UREL complex, plays a key role in ribosome recycling by catalyzing mono-ufmylation of RPL26/uL24 subunit of the 60S ribosome. Ufmylation of RPL26/uL24 occurs on free 60S ribosomes following ribosome dissociation: it weakens the junction between post-termination 60S subunits and SEC61 translocons, promoting release and recycling of the large ribosomal subunit from the endoplasmic reticulum membrane. Ufmylation of RPL26/uL24 and subsequent 60S ribosome recycling either take place after normal termination of translation or after ribosome stalling during cotranslational translocation at the endoplasmic reticulum. Involved in reticulophagy in response to endoplasmic reticulum stress by mediating ufmylation of proteins such as CYB5R3 and RPN1, thereby promoting lysosomal degradation of ufmylated proteins. Ufmylation in response to endoplasmic reticulum stress is essential for processes such as hematopoiesis, blood vessel morphogenesis or inflammatory response. Regulates inflammation in response to endoplasmic reticulum stress by promoting reticulophagy, leading to inhibit the activity of the NF-kappa-B transcription factor. Mediates ufmylation of DDRGK1 and CDK5RAP3; the role of these modifications is however unclear: as both DDRGK1 and CDK5RAP3 act as substrate adapters for ufmylation, it is uncertain whether ufmylation of these proteins is, a collateral effect or is required for ufmylation. Acts as a negative regulator of T-cell activation by mediating ufmylation and stabilization of PDCD1/PD-1. Also involved in the response to DNA damage: recruited to double-strand break sites following DNA damage and mediates monoufmylation of histone H4 and ufmylation of MRE11. Mediates ufmylation of TP53/p53, promoting its stability. Catalyzes ufmylation of TRIP4, thereby playing a role in nuclear receptor-mediated transcription. Required for hematopoietic stem cell function and hematopoiesis. The polypeptide is E3 UFM1-protein ligase 1 (Bos taurus (Bovine)).